A 342-amino-acid chain; its full sequence is D-erythrose-4-phosphate dehydrogenase (342 aa).

11–12 (RV) is a binding site for NAD(+). Residues 153 to 155 (SCT), arginine 199, 212 to 213 (TK), and arginine 235 contribute to the substrate site. Cysteine 154 acts as the Nucleophile in catalysis. Asparagine 317 lines the NAD(+) pocket.

Belongs to the glyceraldehyde-3-phosphate dehydrogenase family. Epd subfamily. As to quaternary structure, homotetramer.

Its subcellular location is the cytoplasm. It catalyses the reaction D-erythrose 4-phosphate + NAD(+) + H2O = 4-phospho-D-erythronate + NADH + 2 H(+). Its pathway is cofactor biosynthesis; pyridoxine 5'-phosphate biosynthesis; pyridoxine 5'-phosphate from D-erythrose 4-phosphate: step 1/5. In terms of biological role, catalyzes the NAD-dependent conversion of D-erythrose 4-phosphate to 4-phosphoerythronate. The polypeptide is D-erythrose-4-phosphate dehydrogenase (Pseudoalteromonas atlantica (strain T6c / ATCC BAA-1087)).